Consider the following 250-residue polypeptide: MRGSPLIRLLATSFLCLLSMVCAQLCRTPCTCPWTPPQCPQGVPLVLDGCGCCKVCARRLTESCEHLHVCEPSQGLVCQPGAGPGGHGAVCLLDEDDGDCEVNGRRYLDGETFKPNCRVLCRCDDGGFTCLPLCSEDVTLPSWDCPRPKRIQVPGKCCPEWVCDQGVTPAIQRSAAQGHQLSALVTPASADAPWPNWSTAWGPCSTTCGLGIATRVSNQNRFCQLEIQRRLCLPRPCLAARSHSSWNSAF.

Positions 1 to 23 are cleaved as a signal peptide; that stretch reads MRGSPLIRLLATSFLCLLSMVCA. Cystine bridges form between cysteine 22–cysteine 50, cysteine 26–cysteine 52, cysteine 32–cysteine 53, cysteine 39–cysteine 56, cysteine 64–cysteine 78, and cysteine 70–cysteine 100. In terms of domain architecture, IGFBP N-terminal spans 24–103; it reads QLCRTPCTCP…DEDDGDCEVN (80 aa). The region spanning 98-164 is the VWFC domain; the sequence is GDCEVNGRRY…GKCCPEWVCD (67 aa). Positions 194–238 constitute a TSP type-1 domain; that stretch reads WPNWSTAWGPCSTTCGLGIATRVSNQNRFCQLEIQRRLCLPRPCL. A glycan (N-linked (GlcNAc...) asparagine) is linked at asparagine 196.

Belongs to the CCN family.

Its subcellular location is the secreted. In terms of biological role, may play an important role in modulating bone turnover. Promotes the adhesion of osteoblast cells and inhibits the binding of fibrinogen to integrin receptors. In addition, inhibits osteocalcin production. The polypeptide is CCN family member 5 (Ccn5) (Rattus norvegicus (Rat)).